The sequence spans 278 residues: Hydroxyethylthiazole kinase (278 aa).

Residue M49 participates in substrate binding. ATP contacts are provided by N125 and S171. A substrate-binding site is contributed by G198.

Belongs to the Thz kinase family. Mg(2+) is required as a cofactor.

It carries out the reaction 5-(2-hydroxyethyl)-4-methylthiazole + ATP = 4-methyl-5-(2-phosphooxyethyl)-thiazole + ADP + H(+). It functions in the pathway cofactor biosynthesis; thiamine diphosphate biosynthesis; 4-methyl-5-(2-phosphoethyl)-thiazole from 5-(2-hydroxyethyl)-4-methylthiazole: step 1/1. Functionally, catalyzes the phosphorylation of the hydroxyl group of 4-methyl-5-beta-hydroxyethylthiazole (THZ). The sequence is that of Hydroxyethylthiazole kinase from Natronomonas pharaonis (strain ATCC 35678 / DSM 2160 / CIP 103997 / JCM 8858 / NBRC 14720 / NCIMB 2260 / Gabara) (Halobacterium pharaonis).